The following is a 227-amino-acid chain: Cytochrome c oxidase subunit 2 (227 aa).

Topologically, residues 1-14 (MAYPLQMGLQDATS) are mitochondrial intermembrane. The chain crosses the membrane as a helical span at residues 15–45 (PIMEELLHFHDHTLMIVFLISSLVLYIISLM). Residues 46-59 (LTTKLTHTSTMDAQ) lie on the Mitochondrial matrix side of the membrane. The chain crosses the membrane as a helical span at residues 60-87 (EVETVWTILPAIILILIALPSLRILYMM). Residues 88 to 227 (DEINNPSLTV…HFEKWSTSML (140 aa)) are Mitochondrial intermembrane-facing. His-161, Cys-196, Glu-198, Cys-200, His-204, and Met-207 together coordinate Cu cation. Glu-198 lines the Mg(2+) pocket.

Belongs to the cytochrome c oxidase subunit 2 family. In terms of assembly, component of the cytochrome c oxidase (complex IV, CIV), a multisubunit enzyme composed of 14 subunits. The complex is composed of a catalytic core of 3 subunits MT-CO1, MT-CO2 and MT-CO3, encoded in the mitochondrial DNA, and 11 supernumerary subunits COX4I, COX5A, COX5B, COX6A, COX6B, COX6C, COX7A, COX7B, COX7C, COX8 and NDUFA4, which are encoded in the nuclear genome. The complex exists as a monomer or a dimer and forms supercomplexes (SCs) in the inner mitochondrial membrane with NADH-ubiquinone oxidoreductase (complex I, CI) and ubiquinol-cytochrome c oxidoreductase (cytochrome b-c1 complex, complex III, CIII), resulting in different assemblies (supercomplex SCI(1)III(2)IV(1) and megacomplex MCI(2)III(2)IV(2)). Found in a complex with TMEM177, COA6, COX18, COX20, SCO1 and SCO2. Interacts with TMEM177 in a COX20-dependent manner. Interacts with COX20. Interacts with COX16. It depends on Cu cation as a cofactor.

The protein localises to the mitochondrion inner membrane. The catalysed reaction is 4 Fe(II)-[cytochrome c] + O2 + 8 H(+)(in) = 4 Fe(III)-[cytochrome c] + 2 H2O + 4 H(+)(out). Functionally, component of the cytochrome c oxidase, the last enzyme in the mitochondrial electron transport chain which drives oxidative phosphorylation. The respiratory chain contains 3 multisubunit complexes succinate dehydrogenase (complex II, CII), ubiquinol-cytochrome c oxidoreductase (cytochrome b-c1 complex, complex III, CIII) and cytochrome c oxidase (complex IV, CIV), that cooperate to transfer electrons derived from NADH and succinate to molecular oxygen, creating an electrochemical gradient over the inner membrane that drives transmembrane transport and the ATP synthase. Cytochrome c oxidase is the component of the respiratory chain that catalyzes the reduction of oxygen to water. Electrons originating from reduced cytochrome c in the intermembrane space (IMS) are transferred via the dinuclear copper A center (CU(A)) of subunit 2 and heme A of subunit 1 to the active site in subunit 1, a binuclear center (BNC) formed by heme A3 and copper B (CU(B)). The BNC reduces molecular oxygen to 2 water molecules using 4 electrons from cytochrome c in the IMS and 4 protons from the mitochondrial matrix. In Phoca vitulina (Harbor seal), this protein is Cytochrome c oxidase subunit 2 (MT-CO2).